The following is a 60-amino-acid chain: Mastoparan-VT3 (60 aa).

Residues 1-27 (MKNTILILFTAFIALLGFFGMSAEALA) form the signal peptide. AXPX repeat units follow at residues 27–30 (ADPK), 31–34 (ADPL), 35–38 (AGPN), and 41–44 (ADPE). The propeptide occupies 28–45 (DPKADPLAGPNPDADPEA). Leu-59 carries the leucine amide modification.

Belongs to the MCD family. Mastoparan subfamily. Expressed by the venom gland.

The protein resides in the secreted. Its function is as follows. The synthetic peptide shows antimicrobial activities against Gram-negative bacteria (but not against all strains tested), Gram-positive bacteria (all strains tested) and the fungi C.albicans and C.parapsilosis. Exhibits moderate hemolytic activity (25% at 100 ug/ml) against washed human erythrocytes. The sequence is that of Mastoparan-VT3 from Vespa tropica (Greater banded hornet).